Here is a 130-residue protein sequence, read N- to C-terminus: Glycine cleavage system H protein (130 aa).

Residues Val-25 to Lys-106 enclose the Lipoyl-binding domain. The residue at position 66 (Lys-66) is an N6-lipoyllysine.

Belongs to the GcvH family. The glycine cleavage system is composed of four proteins: P, T, L and H. (R)-lipoate serves as cofactor.

The glycine cleavage system catalyzes the degradation of glycine. The H protein shuttles the methylamine group of glycine from the P protein to the T protein. The polypeptide is Glycine cleavage system H protein (Leptospira biflexa serovar Patoc (strain Patoc 1 / Ames)).